The following is a 210-amino-acid chain: Na(+)-translocating NADH-quinone reductase subunit D (210 aa).

The next 6 membrane-spanning stretches (helical) occupy residues 9–29 (SVLIGPIVSNNPIALQILGVC), 42–62 (LVMTIALTAVCALSNLFISLI), 72–92 (IIVQMTIIASLVIVVDQVLQA), 103–123 (VFVGLIITNCIVMGRAEAFAM), 131–151 (FMDGLGNGLGYGAILLSVGFV), and 178–198 (NGLLLLPPSAFFLIGALIWII).

Belongs to the NqrDE/RnfAE family. As to quaternary structure, composed of six subunits; NqrA, NqrB, NqrC, NqrD, NqrE and NqrF.

The protein resides in the cell inner membrane. It carries out the reaction a ubiquinone + n Na(+)(in) + NADH + H(+) = a ubiquinol + n Na(+)(out) + NAD(+). NQR complex catalyzes the reduction of ubiquinone-1 to ubiquinol by two successive reactions, coupled with the transport of Na(+) ions from the cytoplasm to the periplasm. NqrA to NqrE are probably involved in the second step, the conversion of ubisemiquinone to ubiquinol. The polypeptide is Na(+)-translocating NADH-quinone reductase subunit D (Shewanella piezotolerans (strain WP3 / JCM 13877)).